The sequence spans 1141 residues: DNA polymerase II large subunit (1141 aa).

The interval 567–587 (AGTRVGGRMGRPGKSAPRKMK) is disordered.

This sequence belongs to the archaeal DNA polymerase II family. As to quaternary structure, heterodimer of a large subunit and a small subunit.

The catalysed reaction is DNA(n) + a 2'-deoxyribonucleoside 5'-triphosphate = DNA(n+1) + diphosphate. It catalyses the reaction Exonucleolytic cleavage in the 3'- to 5'-direction to yield nucleoside 5'-phosphates.. Its function is as follows. Possesses two activities: a DNA synthesis (polymerase) and an exonucleolytic activity that degrades single-stranded DNA in the 3'- to 5'-direction. Has a template-primer preference which is characteristic of a replicative DNA polymerase. The protein is DNA polymerase II large subunit of Methanocorpusculum labreanum (strain ATCC 43576 / DSM 4855 / Z).